Consider the following 171-residue polypeptide: uncharacterized protein (171 aa).

This is an uncharacterized protein from Saccharomyces cerevisiae (strain ATCC 204508 / S288c) (Baker's yeast).